The sequence spans 312 residues: MSANSHPPNSKNVLCNAAAGAAAGVVAATFVCPLDVIKTRFQVHGLPKLGDANIKGSLIVGSLEQIFKREGMRGLYRGLSPTVMALLSNWAIYFTMYDQLKSFLCSNDHKLSVGANVLAASGAGAATTIATNPLWVVKTRLQTQGMRVGIVPYKSTFSALRRIAYEEGIRGLYSGLVPALAGISHVAIQFPTYEMIKVYLAKKGDKSVDNLNARDVAVASSIAKIFASTLTYPHEVVRARLQEQGHHSEKRYSGVRDCIKKVFEKDGFPGFYRGCATNLLRTTPAAVITFTSFEMVHRFLVTHIPSEQSSIL.

3 Solcar repeats span residues 11 to 103, 111 to 199, and 211 to 299; these read KNVL…LKSF, LSVG…IKVY, and LNAR…VHRF. Helical transmembrane passes span 17-37, 78-98, 117-137, 171-191, 216-232, and 271-293; these read AAAGAAAGVVAATFVCPLDVI, GLSPTVMALLSNWAIYFTMYD, VLAASGAGAATTIATNPLWVV, GLYSGLVPALAGISHVAIQFP, VAVASSIAKIFASTLTY, and FYRGCATNLLRTTPAAVITFTSF.

The protein belongs to the mitochondrial carrier (TC 2.A.29) family. As to expression, highly expressed in young leaf mesophyll cells, root tips and at the branches of adventitious roots. Low expression in all flower tissues and not detected in siliques and seeds.

It localises to the plastid. Its subcellular location is the chloroplast membrane. Its activity is regulated as follows. Inhibited by pyridoxal 5'-phosphate, bathophenanthroline, tannic acid, mersalyl, mercuric chloride, p-hydroxymercuribenzoate, p-hydroxymercuribenzoate sulfonate, bromocresol purple and N-ethylmaleimide. Its function is as follows. Mediates the NAD(+) import into chloroplast. Favors the NAD(+)(in)/ADP or AMP(out) antiport exchange, but is also able to catalyze a low unidirectional transport (uniport) of NAD(+). Transports NAD(+), nicotinic acid adenine dinucleotide, nicotinamide mononucleotide, nicotinic acid mononucleotide, FAD, FMN, TTP, TDP, TMP, UTP, UDP, UMP, CTP, CDP, CMP, GTP, GDP, GMP, 3'-AMP, ATP, ADP, and AMP, has low transport activity with cAMP, pyrophosphate, NADH and alpha-NAD(+), and has no activity with NADP(+), NADPH, nicotinamide, nicotinic acid, adenosine, thiamine mono- or diphosphate, inorganic phosphate, CoA, folate, NaCl, malate, malonate, citrate, fumarate, aspartate, glutamate, S-adenosylmethionine, lysine, arginine, and ornithine. In Arabidopsis thaliana (Mouse-ear cress), this protein is Nicotinamide adenine dinucleotide transporter 1, chloroplastic (NDT1).